The sequence spans 164 residues: Lipoprotein signal peptidase (164 aa).

3 helical membrane-spanning segments follow: residues 12–32 (WLWLVVVVLIIDLGSKYLILQ), 70–90 (WFFAGIAIGISVILAVMMYRS), and 102–122 (ALIIGGALGNLFDRLWHGFVV). Active-site residues include D123 and D141. A helical transmembrane segment spans residues 137–157 (FNLADTAICVGAALIVLEGFL).

The protein belongs to the peptidase A8 family.

Its subcellular location is the cell inner membrane. The enzyme catalyses Release of signal peptides from bacterial membrane prolipoproteins. Hydrolyzes -Xaa-Yaa-Zaa-|-(S,diacylglyceryl)Cys-, in which Xaa is hydrophobic (preferably Leu), and Yaa (Ala or Ser) and Zaa (Gly or Ala) have small, neutral side chains.. It participates in protein modification; lipoprotein biosynthesis (signal peptide cleavage). In terms of biological role, this protein specifically catalyzes the removal of signal peptides from prolipoproteins. In Shigella sonnei (strain Ss046), this protein is Lipoprotein signal peptidase.